Consider the following 179-residue polypeptide: Putative undecaprenyl-phosphate N-acetylgalactosaminyl 1-phosphate transferase (179 aa).

Residues 39–59 form a helical membrane-spanning segment; it reads IWFALIGLAIALPMIAVFSIL.

It belongs to the bacterial sugar transferase family.

Its subcellular location is the cell membrane. It carries out the reaction di-trans,octa-cis-undecaprenyl phosphate + UDP-N-acetyl-alpha-D-galactosamine = N-acetyl-alpha-D-galactosaminyl-di-trans,octa-cis-undecaprenyl diphosphate + UMP. The protein operates within cell wall biogenesis; teichuronic acid biosynthesis. In terms of biological role, might mediate the very first reaction in teichuronic synthesis, i.e. the formation of lipid-linked N-acetylglucosamine. This Bacillus subtilis (strain 168) protein is Putative undecaprenyl-phosphate N-acetylgalactosaminyl 1-phosphate transferase (tuaA).